We begin with the raw amino-acid sequence, 177 residues long: HVA22-like protein a (177 aa).

Transmembrane regions (helical) follow at residues 18 to 38, 47 to 67, and 68 to 88; these read VLAG…QAIE, QWLT…TFAK, and LIEW…WLVI.

This sequence belongs to the DP1 family. Predominantly expressed in flower buds and stem.

The protein resides in the membrane. The protein is HVA22-like protein a (HVA22A) of Arabidopsis thaliana (Mouse-ear cress).